The primary structure comprises 392 residues: Queuine tRNA-ribosyltransferase (392 aa).

Aspartate 93 acts as the Proton acceptor in catalysis. Substrate-binding positions include 93–97 (DSGGY), aspartate 147, glutamine 189, and glycine 216. The RNA binding stretch occupies residues 247-253 (GVGAPED). Aspartate 266 acts as the Nucleophile in catalysis. The tract at residues 271 to 275 (TRVAR) is RNA binding; important for wobble base 34 recognition. The Zn(2+) site is built by cysteine 304, cysteine 306, cysteine 309, and histidine 335.

Belongs to the queuine tRNA-ribosyltransferase family. In terms of assembly, homodimer. Within each dimer, one monomer is responsible for RNA recognition and catalysis, while the other monomer binds to the replacement base PreQ1. Zn(2+) is required as a cofactor.

The catalysed reaction is 7-aminomethyl-7-carbaguanine + guanosine(34) in tRNA = 7-aminomethyl-7-carbaguanosine(34) in tRNA + guanine. It participates in tRNA modification; tRNA-queuosine biosynthesis. In terms of biological role, catalyzes the base-exchange of a guanine (G) residue with the queuine precursor 7-aminomethyl-7-deazaguanine (PreQ1) at position 34 (anticodon wobble position) in tRNAs with GU(N) anticodons (tRNA-Asp, -Asn, -His and -Tyr). Catalysis occurs through a double-displacement mechanism. The nucleophile active site attacks the C1' of nucleotide 34 to detach the guanine base from the RNA, forming a covalent enzyme-RNA intermediate. The proton acceptor active site deprotonates the incoming PreQ1, allowing a nucleophilic attack on the C1' of the ribose to form the product. After dissociation, two additional enzymatic reactions on the tRNA convert PreQ1 to queuine (Q), resulting in the hypermodified nucleoside queuosine (7-(((4,5-cis-dihydroxy-2-cyclopenten-1-yl)amino)methyl)-7-deazaguanosine). In Dehalococcoides mccartyi (strain ATCC BAA-2266 / KCTC 15142 / 195) (Dehalococcoides ethenogenes (strain 195)), this protein is Queuine tRNA-ribosyltransferase.